A 213-amino-acid polypeptide reads, in one-letter code: Orotate phosphoribosyltransferase (213 aa).

Lys-26 contacts 5-phospho-alpha-D-ribose 1-diphosphate. Residue 34-35 (FF) participates in orotate binding. 5-phospho-alpha-D-ribose 1-diphosphate-binding positions include 72-73 (YK), Arg-99, Lys-100, Lys-103, His-105, and 124-132 (DDVITAGTA). Orotate-binding residues include Thr-128 and Arg-156.

The protein belongs to the purine/pyrimidine phosphoribosyltransferase family. PyrE subfamily. In terms of assembly, homodimer. Mg(2+) serves as cofactor.

It catalyses the reaction orotidine 5'-phosphate + diphosphate = orotate + 5-phospho-alpha-D-ribose 1-diphosphate. It functions in the pathway pyrimidine metabolism; UMP biosynthesis via de novo pathway; UMP from orotate: step 1/2. In terms of biological role, catalyzes the transfer of a ribosyl phosphate group from 5-phosphoribose 1-diphosphate to orotate, leading to the formation of orotidine monophosphate (OMP). This chain is Orotate phosphoribosyltransferase, found in Pseudomonas putida (strain GB-1).